The primary structure comprises 169 residues: S-ribosylhomocysteine lyase (169 aa).

Fe cation contacts are provided by histidine 54, histidine 58, and cysteine 128.

Belongs to the LuxS family. In terms of assembly, homodimer. Requires Fe cation as cofactor.

The catalysed reaction is S-(5-deoxy-D-ribos-5-yl)-L-homocysteine = (S)-4,5-dihydroxypentane-2,3-dione + L-homocysteine. Its function is as follows. Involved in the synthesis of autoinducer 2 (AI-2) which is secreted by bacteria and is used to communicate both the cell density and the metabolic potential of the environment. The regulation of gene expression in response to changes in cell density is called quorum sensing. Catalyzes the transformation of S-ribosylhomocysteine (RHC) to homocysteine (HC) and 4,5-dihydroxy-2,3-pentadione (DPD). This Aeromonas hydrophila subsp. hydrophila (strain ATCC 7966 / DSM 30187 / BCRC 13018 / CCUG 14551 / JCM 1027 / KCTC 2358 / NCIMB 9240 / NCTC 8049) protein is S-ribosylhomocysteine lyase.